The following is a 508-amino-acid chain: Methionine--tRNA ligase (508 aa).

The 'HIGH' region motif lies at 12-22 (YYVNDVAHIGH). The 'KMSKS' region motif lies at 295 to 299 (KISKS). Position 298 (lysine 298) interacts with ATP.

It belongs to the class-I aminoacyl-tRNA synthetase family. MetG type 2B subfamily. As to quaternary structure, monomer.

It is found in the cytoplasm. The catalysed reaction is tRNA(Met) + L-methionine + ATP = L-methionyl-tRNA(Met) + AMP + diphosphate. Is required not only for elongation of protein synthesis but also for the initiation of all mRNA translation through initiator tRNA(fMet) aminoacylation. This chain is Methionine--tRNA ligase (metG), found in Rickettsia prowazekii (strain Madrid E).